The primary structure comprises 522 residues: Colicin-E1 (522 aa).

Disordered stretches follow at residues 26 to 52 (NGTP…AAIH) and 136 to 165 (EEKA…REKA). The segment covering 30 to 42 (DGSGSGGGGGKGG) has biased composition (gly residues). Transmembrane regions (helical) follow at residues 471–487 (AADA…FSLL) and 494–510 (IWGI…YIDK).

The protein belongs to the channel forming colicin family.

Its subcellular location is the cell membrane. Functionally, this colicin is a channel-forming colicin. This class of transmembrane toxins depolarize the cytoplasmic membrane, leading to dissipation of cellular energy. Its function is as follows. Colicins are polypeptide toxins produced by and active against E.coli and closely related bacteria. This Escherichia coli protein is Colicin-E1 (cea).